A 64-amino-acid chain; its full sequence is Cecropin-A (64 aa).

The N-terminal stretch at 1 to 22 (MNFSRIFFFVFACLTALAMVNA) is a signal peptide. Positions 23–26 (APEP) are cleaved as a propeptide — removed by a dipeptidylpeptidase. Lys-63 bears the Lysine amide mark.

Belongs to the cecropin family. Post-translationally, a protein with the same sequence as cecropin A, but lacking the carboxyl blocking group, has been isolated and called cecropin C.

The protein localises to the secreted. Functionally, cecropins have lytic and antibacterial activity against several Gram-positive and Gram-negative bacteria. This chain is Cecropin-A, found in Hyalophora cecropia (Cecropia moth).